The chain runs to 300 residues: MGGQLSIEARLKSIIPQLTFDSHKGACGKVAIIGGSVEYTGAPYFSGISALRVGCDLAHIFCHQDAAIAIKSYSPELIVHPFFKEDYDTNEVLKWLDTVQALVVGPGLGRDESVMEATLSILKQAITKNIIIILDADGLFLINNHLDLIRGKKNIILTPNVMEYRRLCDVLKVSHNTPCNKVALMLGGVTILQKGQVDEVSNGSYTVHVKHVGSPRRCGGQGDVLSGSLATFVAWSKLNQDFQDEDLICCSVAASALVKECSSFAFTEKHRGVIASDIIESIPSVFDQVFGQNKIQLIYE.

The region spanning 7 to 289 (IEARLKSIIP…ESIPSVFDQV (283 aa)) is the YjeF C-terminal domain. (6S)-NADPHX-binding positions include G107 and 160-166 (NVMEYRR). ATP is bound by residues 194–198 (KGQVD) and 213–222 (GSPRRCGGQG). D223 lines the (6S)-NADPHX pocket.

It belongs to the NnrD/CARKD family. The cofactor is Mg(2+).

It catalyses the reaction (6S)-NADHX + ATP = ADP + phosphate + NADH + H(+). It carries out the reaction (6S)-NADPHX + ATP = ADP + phosphate + NADPH + H(+). Functionally, catalyzes the dehydration of the S-form of NAD(P)HX at the expense of ATP, which is converted to ADP. Together with NAD(P)HX epimerase, which catalyzes the epimerization of the S- and R-forms, the enzyme allows the repair of both epimers of NAD(P)HX, a damaged form of NAD(P)H that is a result of enzymatic or heat-dependent hydration. The polypeptide is ATP-dependent (S)-NAD(P)H-hydrate dehydratase (Entamoeba histolytica (strain ATCC 30459 / HM-1:IMSS / ABRM)).